A 362-amino-acid chain; its full sequence is Terpene synthase 3 (362 aa).

The short motif at 90-95 (DDFLER) is the DDxx(x)D/E motif element. An NDxxSxxxD/E motif motif is present at residues 239-247 (NDCVSYAKE).

This sequence belongs to the terpene synthase family.

It carries out the reaction (2E,6E)-farnesyl diphosphate = beta-maaliene + diphosphate. The enzyme catalyses (2E,6E)-farnesyl diphosphate = aristolene + diphosphate. It catalyses the reaction (2E,6E)-farnesyl diphosphate = calarene + diphosphate. The catalysed reaction is (2E)-geranyl diphosphate = (E)-beta-ocimene + diphosphate. It carries out the reaction (2E)-geranyl diphosphate = (Z)-beta-ocimene + diphosphate. The enzyme catalyses (2E)-geranyl diphosphate + H2O = linalool + diphosphate. It catalyses the reaction (2E)-geranyl diphosphate = beta-myrcene + diphosphate. In terms of biological role, terpene synthase that converts its substrate farnesyl diphosphate (FPP) into an unidentified sesquiterpene as a major product, as well as beta-maaliene, aristolene, calarene and 2 additional unidentified sesquiterpene as minor products. Is also able to convert geranyl diphosphate (GPP) into a mixture of monoterpenes including (Z)-beta-ocimene, (E)-beta-ocimene, allo-ocimene, linalool and beta-myrcene. The protein is Terpene synthase 3 of Dictyostelium discoideum (Social amoeba).